Consider the following 535-residue polypeptide: EH domain-containing protein 3 (535 aa).

The residue at position 1 (methionine 1) is an N-acetylmethionine. The 232-residue stretch at 55–286 (FDNKPMVLLV…DLFKDIQSLP (232 aa)) folds into the Dynamin-type G domain. The G1 motif stretch occupies residues 65-72 (GQYSTGKT). Position 65 to 72 (65 to 72 (GQYSTGKT)) interacts with ATP. Positions 91–92 (EP) are G2 motif. The tract at residues 153–156 (DTPG) is G3 motif. A coiled-coil region spans residues 198–227 (DEFSEVIKALKNHEDKMRVVLNKADQIETQ). The interval 219-222 (NKAD) is G4 motif. Lysine 220 contributes to the ATP binding site. A region of interest (G5 motif) is located at residue isoleucine 243. Tryptophan 258 serves as a coordination point for ATP. Lysine 315 participates in a covalent cross-link: Glycyl lysine isopeptide (Lys-Gly) (interchain with G-Cter in SUMO). Serine 349 and serine 456 each carry phosphoserine. An EH domain is found at 444–532 (DKPMYDEIFY…AHLLPPSKRK (89 aa)). The EF-hand domain maps to 476 to 511 (LPNSVLGKIWKLADIDKDGMLDDEEFALANHLIKVK). Ca(2+) contacts are provided by aspartate 489, aspartate 491, aspartate 493, methionine 495, and glutamate 500. Lysine 511 participates in a covalent cross-link: Glycyl lysine isopeptide (Lys-Gly) (interchain with G-Cter in SUMO).

It belongs to the TRAFAC class dynamin-like GTPase superfamily. Dynamin/Fzo/YdjA family. EHD subfamily. As to quaternary structure, homooligomer, and heterooligomer with EHD1, EHD2 and EHD4, ATP-binding is required for heterooligomerization. Interacts with PACSIN1. Interacts with PACSIN2. Interacts (via EH domain) with MICALL1. Interacts (via EH domain) with RAB11FIP2. Interacts with ANK2. Interacts with CACNA1GG and CACNA1H.

The protein localises to the recycling endosome membrane. It is found in the cell membrane. The protein resides in the cell projection. It localises to the cilium membrane. In terms of biological role, ATP- and membrane-binding protein that controls membrane reorganization/tubulation upon ATP hydrolysis. In vitro causes tubulation of endocytic membranes. Binding to phosphatidic acid induces its membrane tubulation activity. Plays a role in endocytic transport. Involved in early endosome to recycling endosome compartment (ERC), retrograde early endosome to Golgi, and endosome to plasma membrane (rapid recycling) protein transport. Involved in the regulation of Golgi maintenance and morphology. Involved in the recycling of internalized D1 dopamine receptor. Plays a role in cardiac protein trafficking probably implicating ANK2. Involved in the ventricular membrane targeting of SLC8A1 and CACNA1C and probably the atrial membrane localization of CACNA1GG and CACNA1H implicated in the regulation of atrial myocyte excitability and cardiac conduction. In conjunction with EHD4 may be involved in endocytic trafficking of KDR/VEGFR2 implicated in control of glomerular function. Involved in the rapid recycling of integrin beta-3 implicated in cell adhesion maintenance. Involved in the unidirectional retrograde dendritic transport of endocytosed BACE1 and in efficient sorting of BACE1 to axons implicating a function in neuronal APP processing. Plays a role in the formation of the ciliary vesicle, an early step in cilium biogenesis; possibly sharing redundant functions with Ehd1. This chain is EH domain-containing protein 3, found in Rattus norvegicus (Rat).